The sequence spans 417 residues: Exodeoxyribonuclease 7 large subunit (417 aa).

This sequence belongs to the XseA family. As to quaternary structure, heterooligomer composed of large and small subunits.

The protein localises to the cytoplasm. The catalysed reaction is Exonucleolytic cleavage in either 5'- to 3'- or 3'- to 5'-direction to yield nucleoside 5'-phosphates.. Functionally, bidirectionally degrades single-stranded DNA into large acid-insoluble oligonucleotides, which are then degraded further into small acid-soluble oligonucleotides. The polypeptide is Exodeoxyribonuclease 7 large subunit (Corynebacterium glutamicum (strain ATCC 13032 / DSM 20300 / JCM 1318 / BCRC 11384 / CCUG 27702 / LMG 3730 / NBRC 12168 / NCIMB 10025 / NRRL B-2784 / 534)).